A 335-amino-acid chain; its full sequence is Ferredoxin--NADP reductase (335 aa).

7 residues coordinate FAD: D34, Q42, Y47, A87, F121, D287, and T328.

The protein belongs to the ferredoxin--NADP reductase type 2 family. In terms of assembly, homodimer. It depends on FAD as a cofactor.

The catalysed reaction is 2 reduced [2Fe-2S]-[ferredoxin] + NADP(+) + H(+) = 2 oxidized [2Fe-2S]-[ferredoxin] + NADPH. This Rickettsia felis (strain ATCC VR-1525 / URRWXCal2) (Rickettsia azadi) protein is Ferredoxin--NADP reductase.